The following is a 106-amino-acid chain: Large ribosomal subunit protein uL24 (106 aa).

It belongs to the universal ribosomal protein uL24 family. In terms of assembly, part of the 50S ribosomal subunit.

One of two assembly initiator proteins, it binds directly to the 5'-end of the 23S rRNA, where it nucleates assembly of the 50S subunit. Its function is as follows. One of the proteins that surrounds the polypeptide exit tunnel on the outside of the subunit. This Acidovorax sp. (strain JS42) protein is Large ribosomal subunit protein uL24.